The primary structure comprises 250 residues: Transcriptional activator protein EchR (250 aa).

The 66-residue stretch at 173–238 (KSQEPNIFSQ…HAIRLGVEMN (66 aa)) folds into the HTH luxR-type domain. Residues 197–216 (YQEIALILGITTSTVKFHIG) constitute a DNA-binding region (H-T-H motif).

The protein belongs to the autoinducer-regulated transcriptional regulatory protein family.

In terms of biological role, functions as a potential ohlL-responsive transcriptional regulator. This Dickeya chrysanthemi (Pectobacterium chrysanthemi) protein is Transcriptional activator protein EchR (echR).